Reading from the N-terminus, the 321-residue chain is Lipoyl synthase (321 aa).

[4Fe-4S] cluster-binding residues include Cys68, Cys73, Cys79, Cys94, Cys98, Cys101, and Ser308. One can recognise a Radical SAM core domain in the interval 80–297 (FNHGTATFMI…KAYADEIGFT (218 aa)).

It belongs to the radical SAM superfamily. Lipoyl synthase family. It depends on [4Fe-4S] cluster as a cofactor.

It is found in the cytoplasm. The catalysed reaction is [[Fe-S] cluster scaffold protein carrying a second [4Fe-4S](2+) cluster] + N(6)-octanoyl-L-lysyl-[protein] + 2 oxidized [2Fe-2S]-[ferredoxin] + 2 S-adenosyl-L-methionine + 4 H(+) = [[Fe-S] cluster scaffold protein] + N(6)-[(R)-dihydrolipoyl]-L-lysyl-[protein] + 4 Fe(3+) + 2 hydrogen sulfide + 2 5'-deoxyadenosine + 2 L-methionine + 2 reduced [2Fe-2S]-[ferredoxin]. Its pathway is protein modification; protein lipoylation via endogenous pathway; protein N(6)-(lipoyl)lysine from octanoyl-[acyl-carrier-protein]: step 2/2. Its function is as follows. Catalyzes the radical-mediated insertion of two sulfur atoms into the C-6 and C-8 positions of the octanoyl moiety bound to the lipoyl domains of lipoate-dependent enzymes, thereby converting the octanoylated domains into lipoylated derivatives. This chain is Lipoyl synthase, found in Pseudoalteromonas translucida (strain TAC 125).